The following is a 398-amino-acid chain: Odorant receptor 24a (398 aa).

The Cytoplasmic segment spans residues 1–14; that stretch reads MLPRFLTASYPMER. The chain crosses the membrane as a helical span at residues 15–31; the sequence is HYFMVPKFALSLIGFYP. Topologically, residues 32–46 are extracellular; it reads EQKRTVLVKLWSFFN. A helical membrane pass occupies residues 47 to 67; it reads FFILTYGCYAEAYYGIHYIPI. Topologically, residues 68–74 are cytoplasmic; the sequence is NIATALD. The chain crosses the membrane as a helical span at residues 75 to 95; sequence ALCPVASSILSLVKMVAIWWY. Residues 96-124 are Extracellular-facing; sequence QDELRSLIERVRFLTEQQKSKRKLGYKKR. A helical transmembrane segment spans residues 125–145; sequence FYTLATQLTFLLLCCGFCTST. Residues 146–199 are Cytoplasmic-facing; that stretch reads SYSVRHLIDNILRRTHGKDWIYETPFKMMFPDLLLRLPLYPITYILVHWHGYIT. A helical transmembrane segment spans residues 200–220; sequence VVCFVGADGFFLGFCLYFTVL. Topologically, residues 221–269 are extracellular; it reads LLCLQDDVCDLLEVENIEKSPSEAEEARIVREMEKLVDRHNEVAELTER. A helical membrane pass occupies residues 270 to 290; it reads LSGVMVEITLAHFVTSSLIIG. At 291 to 295 the chain is on the cytoplasmic side; the sequence is TSVVD. A helical transmembrane segment spans residues 296–316; it reads ILLFSGLGIIVYVVYTCAVGV. At 317 to 398 the chain is on the extracellular side; the sequence is EIFLYCLGGS…SLIALAKSVI (82 aa).

The protein belongs to the insect chemoreceptor superfamily. Heteromeric odorant receptor channel (TC 1.A.69) family. Or1a subfamily. In terms of assembly, interacts with Orco. Complexes exist early in the endomembrane system in olfactory sensory neurons (OSNs), coupling these complexes to the conserved ciliary trafficking pathway. As to expression, not expressed in either the antenna or maxillary palp.

It is found in the cell membrane. In terms of biological role, odorant receptor which mediates acceptance or avoidance behavior, depending on its substrates. The odorant receptor repertoire encodes a large collection of odor stimuli that vary widely in identity, intensity, and duration. May form a complex with Orco to form odorant-sensing units, providing sensitive and prolonged odorant signaling and calcium permeability. Involved in the behavioral responses to pentanol, hexanol, octanol, nonanol, propyl acetate, butyl acetate, isoamyl acetate, methyl caproate, anisole, heptanal, 2-heptanone, r-carvone, and nonanoic acid. Also responds to pyrazines. The sequence is that of Odorant receptor 24a (Or24a) from Drosophila melanogaster (Fruit fly).